Consider the following 288-residue polypeptide: Protoheme IX farnesyltransferase (288 aa).

Helical transmembrane passes span 6-26 (VILY…LLSL), 44-64 (FLDS…NNVI), 89-109 (LAIL…VKFI), 111-131 (VVCF…YSFF), 138-158 (ISTI…YCSV), 169-189 (LLIM…ILHF), 213-233 (IILH…INSI), 238-258 (LIIS…ELTI), and 268-288 (IFRW…FGFV).

It belongs to the UbiA prenyltransferase family. Protoheme IX farnesyltransferase subfamily.

It localises to the cell membrane. The catalysed reaction is heme b + (2E,6E)-farnesyl diphosphate + H2O = Fe(II)-heme o + diphosphate. Its pathway is porphyrin-containing compound metabolism; heme O biosynthesis; heme O from protoheme: step 1/1. Its function is as follows. Converts heme B (protoheme IX) to heme O by substitution of the vinyl group on carbon 2 of heme B porphyrin ring with a hydroxyethyl farnesyl side group. In Buchnera aphidicola subsp. Baizongia pistaciae (strain Bp), this protein is Protoheme IX farnesyltransferase.